A 269-amino-acid polypeptide reads, in one-letter code: 3-deoxy-manno-octulosonate cytidylyltransferase (269 aa).

Belongs to the KdsB family.

The protein resides in the cytoplasm. The enzyme catalyses 3-deoxy-alpha-D-manno-oct-2-ulosonate + CTP = CMP-3-deoxy-beta-D-manno-octulosonate + diphosphate. It participates in nucleotide-sugar biosynthesis; CMP-3-deoxy-D-manno-octulosonate biosynthesis; CMP-3-deoxy-D-manno-octulosonate from 3-deoxy-D-manno-octulosonate and CTP: step 1/1. It functions in the pathway bacterial outer membrane biogenesis; lipopolysaccharide biosynthesis. In terms of biological role, activates KDO (a required 8-carbon sugar) for incorporation into bacterial lipopolysaccharide in Gram-negative bacteria. This is 3-deoxy-manno-octulosonate cytidylyltransferase from Cupriavidus necator (strain ATCC 17699 / DSM 428 / KCTC 22496 / NCIMB 10442 / H16 / Stanier 337) (Ralstonia eutropha).